A 333-amino-acid polypeptide reads, in one-letter code: MKGKLLKGVLSLGVGLGALYSGTSAQAEASTNQNDTLKVMTHNVYMLSTNLYPNWGQTERADLFGAADYIKNQDVVILNEVFDNSASDRLLGNLKKEYPNQTAVLGRSSGSEWDKTLGNYSSSTPEDGGVAIVSKWPIAEKIQYVFAKGCGPDNLSNKGFVYTKIKKNDRFVHVIGTHLQAEDSMCGKTSPASVRTNQLKEIQDFIKNKNIPNNEYVLIGGDMNVNKINAENNNDSEYASMFKTLNASVPSYTGHTATWDATTNSIAKYNFPDSLAEYLDYIIASKDHANPSYIENKVLQPKSPQWTVTSWFKNIRIMITLIIIQVEATISMK.

An N-terminal signal peptide occupies residues 1 to 26 (MKGKLLKGVLSLGVGLGALYSGTSAQ). C150 and C186 are disulfide-bonded.

It belongs to the neutral sphingomyelinase family. The cofactor is Mg(2+). In terms of processing, the N-terminus is blocked.

Its subcellular location is the secreted. The enzyme catalyses a sphingomyelin + H2O = phosphocholine + an N-acylsphing-4-enine + H(+). Its activity is regulated as follows. Activated by cobalt and manganese ions. Its function is as follows. Required, with sphingomyelinase, to effect target cell lysis (hemolysis). This is Sphingomyelinase C (cerB) from Bacillus cereus.